A 491-amino-acid polypeptide reads, in one-letter code: Proline--tRNA ligase (491 aa).

This sequence belongs to the class-II aminoacyl-tRNA synthetase family. ProS type 3 subfamily. Homodimer.

Its subcellular location is the cytoplasm. It catalyses the reaction tRNA(Pro) + L-proline + ATP = L-prolyl-tRNA(Pro) + AMP + diphosphate. Catalyzes the attachment of proline to tRNA(Pro) in a two-step reaction: proline is first activated by ATP to form Pro-AMP and then transferred to the acceptor end of tRNA(Pro). In Halorubrum lacusprofundi (strain ATCC 49239 / DSM 5036 / JCM 8891 / ACAM 34), this protein is Proline--tRNA ligase.